The chain runs to 61 residues: Large ribosomal subunit protein uL30 (61 aa).

It belongs to the universal ribosomal protein uL30 family. In terms of assembly, part of the 50S ribosomal subunit.

The chain is Large ribosomal subunit protein uL30 from Exiguobacterium sp. (strain ATCC BAA-1283 / AT1b).